Here is a 157-residue protein sequence, read N- to C-terminus: 2-C-methyl-D-erythritol 2,4-cyclodiphosphate synthase (157 aa).

A divalent metal cation is bound by residues aspartate 8 and histidine 10. Residues 8–10 (DVH) and 34–35 (HS) contribute to the 4-CDP-2-C-methyl-D-erythritol 2-phosphate site. Histidine 42 contacts a divalent metal cation. 4-CDP-2-C-methyl-D-erythritol 2-phosphate contacts are provided by residues 56–58 (DIG), 132–135 (TTNE), and arginine 142.

The protein belongs to the IspF family. Homotrimer. A divalent metal cation serves as cofactor.

The catalysed reaction is 4-CDP-2-C-methyl-D-erythritol 2-phosphate = 2-C-methyl-D-erythritol 2,4-cyclic diphosphate + CMP. Its pathway is isoprenoid biosynthesis; isopentenyl diphosphate biosynthesis via DXP pathway; isopentenyl diphosphate from 1-deoxy-D-xylulose 5-phosphate: step 4/6. In terms of biological role, involved in the biosynthesis of isopentenyl diphosphate (IPP) and dimethylallyl diphosphate (DMAPP), two major building blocks of isoprenoid compounds. Catalyzes the conversion of 4-diphosphocytidyl-2-C-methyl-D-erythritol 2-phosphate (CDP-ME2P) to 2-C-methyl-D-erythritol 2,4-cyclodiphosphate (ME-CPP) with a corresponding release of cytidine 5-monophosphate (CMP). This chain is 2-C-methyl-D-erythritol 2,4-cyclodiphosphate synthase, found in Chlorobaculum tepidum (strain ATCC 49652 / DSM 12025 / NBRC 103806 / TLS) (Chlorobium tepidum).